A 526-amino-acid chain; its full sequence is 3-hydroxy-3-methylglutaryl-coenzyme A reductase 2 (526 aa).

Residues Glu-193, Lys-325, and Asp-401 each act as charge relay system in the active site. Residue His-499 is the Proton donor of the active site. Residues 503–526 (NRKTEAPAPQADTISMTHNLPHSD) form a disordered region. Polar residues predominate over residues 514–526 (DTISMTHNLPHSD).

It belongs to the HMG-CoA reductase family.

It catalyses the reaction (R)-mevalonate + 2 NADP(+) + CoA = (3S)-3-hydroxy-3-methylglutaryl-CoA + 2 NADPH + 2 H(+). It functions in the pathway metabolic intermediate biosynthesis; (R)-mevalonate biosynthesis; (R)-mevalonate from acetyl-CoA: step 3/3. This transmembrane glycoprotein is involved in the control of cholesterol biosynthesis. It is the rate-limiting enzyme of the sterol biosynthesis. The polypeptide is 3-hydroxy-3-methylglutaryl-coenzyme A reductase 2 (hmgB) (Dictyostelium discoideum (Social amoeba)).